Reading from the N-terminus, the 172-residue chain is 6,7-dimethyl-8-ribityllumazine synthase (172 aa).

5-amino-6-(D-ribitylamino)uracil-binding positions include phenylalanine 22 and 56 to 58 (AFE). A (2S)-2-hydroxy-3-oxobutyl phosphate-binding site is contributed by 78–79 (LG). Residue 80–82 (AII) participates in 5-amino-6-(D-ribitylamino)uracil binding. The active-site Proton donor is histidine 88. Residue phenylalanine 113 participates in 5-amino-6-(D-ribitylamino)uracil binding. Arginine 127 contacts (2S)-2-hydroxy-3-oxobutyl phosphate.

Belongs to the DMRL synthase family.

It carries out the reaction (2S)-2-hydroxy-3-oxobutyl phosphate + 5-amino-6-(D-ribitylamino)uracil = 6,7-dimethyl-8-(1-D-ribityl)lumazine + phosphate + 2 H2O + H(+). It functions in the pathway cofactor biosynthesis; riboflavin biosynthesis; riboflavin from 2-hydroxy-3-oxobutyl phosphate and 5-amino-6-(D-ribitylamino)uracil: step 1/2. Its function is as follows. Catalyzes the formation of 6,7-dimethyl-8-ribityllumazine by condensation of 5-amino-6-(D-ribitylamino)uracil with 3,4-dihydroxy-2-butanone 4-phosphate. This is the penultimate step in the biosynthesis of riboflavin. This is 6,7-dimethyl-8-ribityllumazine synthase from Protochlamydia amoebophila (strain UWE25).